A 250-amino-acid polypeptide reads, in one-letter code: Octanoyltransferase (250 aa).

Residues D49–L230 enclose the BPL/LPL catalytic domain. Substrate-binding positions include R87–H94, A160–G162, and G173–A175. The Acyl-thioester intermediate role is filled by C191.

The protein belongs to the LipB family.

The protein resides in the cytoplasm. The catalysed reaction is octanoyl-[ACP] + L-lysyl-[protein] = N(6)-octanoyl-L-lysyl-[protein] + holo-[ACP] + H(+). Its pathway is protein modification; protein lipoylation via endogenous pathway; protein N(6)-(lipoyl)lysine from octanoyl-[acyl-carrier-protein]: step 1/2. Catalyzes the transfer of endogenously produced octanoic acid from octanoyl-acyl-carrier-protein onto the lipoyl domains of lipoate-dependent enzymes. Lipoyl-ACP can also act as a substrate although octanoyl-ACP is likely to be the physiological substrate. The chain is Octanoyltransferase from Corynebacterium diphtheriae (strain ATCC 700971 / NCTC 13129 / Biotype gravis).